Reading from the N-terminus, the 109-residue chain is Putative ankyrin repeat protein L482 (109 aa).

ANK repeat units lie at residues Tyr1–Thr26, Asn27–Ser56, Glu57–Ser86, and Asn88–Ala109.

In Acanthamoeba polyphaga (Amoeba), this protein is Putative ankyrin repeat protein L482.